Reading from the N-terminus, the 213-residue chain is UPF0301 protein RPC_0788 (213 aa).

A disordered region spans residues 1 to 20 (MDPKSKAPKRDETKGADDAS).

It belongs to the UPF0301 (AlgH) family.

The polypeptide is UPF0301 protein RPC_0788 (Rhodopseudomonas palustris (strain BisB18)).